The chain runs to 606 residues: Transmembrane 9 superfamily member 1 (606 aa).

A signal peptide spans 1 to 27 (MTVLGYPRSWSCHCLPVLILLLGIGHG). Asn178 is a glycosylation site (N-linked (GlcNAc...) asparagine). A run of 4 helical transmembrane segments spans residues 237–257 (LSII…AVIL), 310–330 (VLGV…MALL), 339–359 (GAIN…SGYV), and 373–393 (VWNI…TWSV). The N-linked (GlcNAc...) asparagine glycan is linked to Asn401. Helical transmembrane passes span 412-432 (ILLL…IGGI), 469-489 (VGGF…FATV), 499-519 (GILF…SIAL), and 535-555 (SVLS…FYYA). N-linked (GlcNAc...) asparagine glycosylation occurs at Asn559. Residues 570 to 590 (FGYSLLTGYVFFLMLGTISFF) traverse the membrane as a helical segment.

The protein belongs to the nonaspanin (TM9SF) (TC 9.A.2) family.

It is found in the lysosome membrane. The protein resides in the cytoplasmic vesicle. Its subcellular location is the autophagosome membrane. Its function is as follows. Plays an essential role in autophagy. The sequence is that of Transmembrane 9 superfamily member 1 (Tm9sf1) from Mus musculus (Mouse).